We begin with the raw amino-acid sequence, 237 residues long: Immunoglobulin superfamily member 6 (237 aa).

An N-terminal signal peptide occupies residues 1-27 (MGPVSARRSRLRPEISLILFQVGMVGA). The Extracellular portion of the chain corresponds to 28–152 (CTVYVLQPGY…ERLFSKEVRS (125 aa)). The region spanning 30–134 (VYVLQPGYLE…ELSPSAKHVG (105 aa)) is the Ig-like C2-type domain. Cys-51 and Cys-118 are joined by a disulfide. A helical membrane pass occupies residues 153-173 (FLIVLLALLSVYITGVCVTFI). The Cytoplasmic segment spans residues 174 to 237 (VLFKSKSNGP…RKALPNPGRA (64 aa)). Over residues 215-229 (TSHLPEQEGTDENRK) the composition is skewed to basic and acidic residues. The interval 215 to 237 (TSHLPEQEGTDENRKALPNPGRA) is disordered.

Ubiquitous with higher expression in immune tissue.

It localises to the membrane. The chain is Immunoglobulin superfamily member 6 (Igsf6) from Mus musculus (Mouse).